We begin with the raw amino-acid sequence, 84 residues long: Kappa-conotoxin-like Im11.3 (84 aa).

The N-terminal stretch at 1–26 (MMFRLTSVSCFLLVIACLNLFQVVLT) is a signal peptide. Intrachain disulfides connect Cys29/Cys43, Cys36/Cys48, Cys42/Cys51, and Cys47/Cys64. Residues 71 to 84 (LRPSHPLFLLLPAR) constitute a propeptide that is removed on maturation.

This sequence belongs to the conotoxin I2 superfamily. In terms of tissue distribution, expressed by the venom duct.

It is found in the secreted. Functionally, inhibits the vertebrate voltage-gated potassium channels Kv1.1/KCNA1 and Kv1.3/KCNA3. This Conus imperialis (Imperial cone) protein is Kappa-conotoxin-like Im11.3.